A 384-amino-acid chain; its full sequence is V-type proton ATPase subunit C (384 aa).

Belongs to the V-ATPase C subunit family. V-ATPase is a heteromultimeric enzyme made up of two complexes: the ATP-hydrolytic V1 complex and the proton translocation V0 complex. The V1 complex consists of three catalytic AB heterodimers that form a heterohexamer, three peripheral stalks each consisting of EG heterodimers, one central rotor including subunits D and F, and the regulatory subunits C and H. The proton translocation complex V0 consists of the proton transport subunit a, a ring of proteolipid subunits c9c'', rotary subunit d, subunits e and f, and the accessory subunits vah-19/Ac45 and vah-20/PRR. Interacts with V-type proton ATPase subunits a1 unc-32, a2 vha-5 and a3 vha-6. As to expression, expressed ubiquitously; higher levels are found in gastrointestinal and hypodermal cells, as well as H-shaped excretory cell.

It localises to the cytoplasm. The protein resides in the membrane. Its function is as follows. Subunit of the V1 complex of vacuolar(H+)-ATPase (V-ATPase), a multisubunit enzyme composed of a peripheral complex (V1) that hydrolyzes ATP and a membrane integral complex (V0) that translocates protons. V-ATPase is responsible for acidifying and maintaining the pH of intracellular compartments and in some cell types, is targeted to the plasma membrane, where it is responsible for acidifying the extracellular environment. Subunit C is necessary for the assembly of the catalytic sector of the enzyme and is likely to have a specific function in its catalytic activity. Has roles in embryogenesis and ovulation. The sequence is that of V-type proton ATPase subunit C from Caenorhabditis elegans.